The chain runs to 126 residues: 13 kDa ribonucleoprotein-associated protein (126 aa).

The protein belongs to the eukaryotic ribosomal protein eL8 family. In terms of assembly, component of the U3 snoRNP particle. Binds to the C'/D and B/C motifs in U3 snoRNA. Component of the 25S U4/U6.U5 tri-snRNP particle, a subcomplex of the spliceosome. Binds to the 5' stem-loop of U4 snRNA.

It localises to the nucleus. The protein localises to the nucleolus. Common component of the spliceosome and rRNA processing machinery. In association with the spliceosomal U4/U6.U5 tri-snRNP particle, required for splicing of pre-mRNA. In association with box C/D snoRNPs, required for processing of pre-ribosomal RNA (rRNA) and site-specific 2'-O-methylation of substrate RNAs. Essential for the accumulation and stability of U4 snRNA, U6 snRNA, and box C/D snoRNAs. This chain is 13 kDa ribonucleoprotein-associated protein (SNU13), found in Yarrowia lipolytica (strain CLIB 122 / E 150) (Yeast).